The sequence spans 431 residues: MSDKLLTIDLSHVYGFDKEIIFKKYQKKVDQIHQDFLAHKLADGHMTGWYDQPDQNHQFLLKTINQIDKKFKSLKVTDIVYVGIGGSFTGIKTVLDFLKPKQRTGLKIHFVPDLSAFQAASVIKEIKNKSWALITTSKSGRTLEPALNFRIFRNLLNKRYGNKHYQRVVVITDEKKGLLTKMASNHGYQKLVIDSNIGGRFSTLSPAGLLLAKLFGHDPKAILKGTLQAKKDLQTTSLENNSAYLYAVVRHWLYTTKKFKIEVCIAYHSLYEYLLLQHRQLFGESEGKNDKSLFPTFSIFTVDLHSMGQLYQEGEKVFFETVIDVKNPLVNINLPPSDFDNDDELDFLLDKSLNEISDVAIDSVIKAHYQANVSIIKLTLKEQSAFMFGYFYFWLSVATVMSGSLLGHNVFNQPGVEVYKKLMFEKLRSGH.

The Proton donor role is filled by E284. Active-site residues include H305 and K420.

Belongs to the GPI family.

It localises to the cytoplasm. The catalysed reaction is alpha-D-glucose 6-phosphate = beta-D-fructose 6-phosphate. It participates in carbohydrate biosynthesis; gluconeogenesis. It functions in the pathway carbohydrate degradation; glycolysis; D-glyceraldehyde 3-phosphate and glycerone phosphate from D-glucose: step 2/4. In terms of biological role, catalyzes the reversible isomerization of glucose-6-phosphate to fructose-6-phosphate. The sequence is that of Glucose-6-phosphate isomerase from Mycoplasma genitalium (strain ATCC 33530 / DSM 19775 / NCTC 10195 / G37) (Mycoplasmoides genitalium).